Here is a 491-residue protein sequence, read N- to C-terminus: Cobyric acid synthase (491 aa).

One can recognise a GATase cobBQ-type domain in the interval 249 to 439 (PIDIAVIKLP…IHGVFDGVEF (191 aa)). The active-site Nucleophile is cysteine 329. Histidine 431 is a catalytic residue.

The protein belongs to the CobB/CobQ family. CobQ subfamily.

The protein operates within cofactor biosynthesis; adenosylcobalamin biosynthesis. In terms of biological role, catalyzes amidations at positions B, D, E, and G on adenosylcobyrinic A,C-diamide. NH(2) groups are provided by glutamine, and one molecule of ATP is hydrogenolyzed for each amidation. The chain is Cobyric acid synthase from Clostridium tetani (strain Massachusetts / E88).